Reading from the N-terminus, the 387-residue chain is Pyrophosphate--fructose 6-phosphate 1-phosphotransferase 3 (387 aa).

Glycine 15 is a binding site for diphosphate. Residue aspartate 114 participates in Mg(2+) binding. Residues threonine 140–aspartate 142, methionine 186–arginine 188, glutamate 247, and tyrosine 308–arginine 311 each bind substrate. Residue aspartate 142 is the Proton acceptor of the active site.

This sequence belongs to the phosphofructokinase type A (PFKA) family. PPi-dependent PFK group II subfamily. Clade 'Short' sub-subfamily. Homotetramer. Mg(2+) is required as a cofactor.

Its subcellular location is the cytoplasm. It catalyses the reaction beta-D-fructose 6-phosphate + diphosphate = beta-D-fructose 1,6-bisphosphate + phosphate + H(+). The protein operates within carbohydrate degradation; glycolysis; D-glyceraldehyde 3-phosphate and glycerone phosphate from D-glucose: step 3/4. With respect to regulation, non-allosteric. Its function is as follows. Catalyzes the phosphorylation of D-fructose 6-phosphate, the first committing step of glycolysis. Uses inorganic phosphate (PPi) as phosphoryl donor instead of ATP like common ATP-dependent phosphofructokinases (ATP-PFKs), which renders the reaction reversible, and can thus function both in glycolysis and gluconeogenesis. Consistently, PPi-PFK can replace the enzymes of both the forward (ATP-PFK) and reverse (fructose-bisphosphatase (FBPase)) reactions. The sequence is that of Pyrophosphate--fructose 6-phosphate 1-phosphotransferase 3 (pfk3) from Trichomonas vaginalis (strain ATCC PRA-98 / G3).